A 498-amino-acid polypeptide reads, in one-letter code: ATP synthase subunit beta, chloroplastic (498 aa).

Position 172 to 179 (172 to 179 (GGAGVGKT)) interacts with ATP.

The protein belongs to the ATPase alpha/beta chains family. In terms of assembly, F-type ATPases have 2 components, CF(1) - the catalytic core - and CF(0) - the membrane proton channel. CF(1) has five subunits: alpha(3), beta(3), gamma(1), delta(1), epsilon(1). CF(0) has four main subunits: a(1), b(1), b'(1) and c(9-12).

The protein resides in the plastid. It is found in the chloroplast thylakoid membrane. It catalyses the reaction ATP + H2O + 4 H(+)(in) = ADP + phosphate + 5 H(+)(out). Its function is as follows. Produces ATP from ADP in the presence of a proton gradient across the membrane. The catalytic sites are hosted primarily by the beta subunits. The chain is ATP synthase subunit beta, chloroplastic from Populus trichocarpa (Western balsam poplar).